A 294-amino-acid chain; its full sequence is MNRMSEKQIQNSLFEYKFIDFNGPLDTLCVLIKQKRLDINNLDILELSKQYVNFVNQLIKTIDIDILGDHLAMASYLLELKTRMLMPTVDEKQIMSIEEDRQNLIDRLIEYNGYKNLSEHLKQRFEFRATMMDLPQQDYEQFYLKDAIYKPLPNHLDSMILKNIMDKIIYENELKNYKINKIKVHEYDVKQLEQLLLNYLKQSPNQQASMLSFFDIQAVIDKNKRFFAIMFLIILILINRNEILFEELDNDYLLKINIERVVDDYNSSSVEQAKNLTSNLTKDTIINFKGEDNE.

Belongs to the ScpA family. As to quaternary structure, component of a cohesin-like complex composed of ScpA, ScpB and the Smc homodimer, in which ScpA and ScpB bind to the head domain of Smc. The presence of the three proteins is required for the association of the complex with DNA.

The protein localises to the cytoplasm. In terms of biological role, participates in chromosomal partition during cell division. May act via the formation of a condensin-like complex containing Smc and ScpB that pull DNA away from mid-cell into both cell halves. The chain is Segregation and condensation protein A from Ureaplasma parvum serovar 3 (strain ATCC 700970).